The sequence spans 129 residues: Transmembrane protein 105 (129 aa).

2 helical membrane passes run 23-43 (AGNV…TAWL) and 94-114 (FLAG…CGVV).

It is found in the membrane. In Homo sapiens (Human), this protein is Transmembrane protein 105 (TMEM105).